Reading from the N-terminus, the 579-residue chain is Potassium-transporting ATPase potassium-binding subunit (579 aa).

Helical transmembrane passes span 2 to 22 (MNLVLQYGLYILILVVLAIPL), 66 to 86 (SFSVLAFSIISLIVLFLIHIF), 135 to 155 (GLTVQNFVSAAVGISVLFALI), 177 to 197 (VLYILIPLSIVVSLALVSQGV), 262 to 282 (LSNLFEMISLLLIPVALCFTF), 292 to 312 (GIAIFIAMGIMLVVAMGIIGV), 391 to 411 (VFGGVGCGLYGMIGFAILAVF), 437 to 457 (VLVCLATPIAILIGSGIASIL), 490 to 510 (FAGFAANTPFINISIGLSMLF), and 546 to 566 (FIGLLIFVVLLIGALSFFPAL).

This sequence belongs to the KdpA family. The system is composed of three essential subunits: KdpA, KdpB and KdpC.

The protein resides in the cell membrane. Its function is as follows. Part of the high-affinity ATP-driven potassium transport (or Kdp) system, which catalyzes the hydrolysis of ATP coupled with the electrogenic transport of potassium into the cytoplasm. This subunit binds the extracellular potassium ions and delivers the ions to the membrane domain of KdpB through an intramembrane tunnel. In Clostridium botulinum (strain Alaska E43 / Type E3), this protein is Potassium-transporting ATPase potassium-binding subunit.